A 155-amino-acid chain; its full sequence is Ribosomal RNA large subunit methyltransferase H (155 aa).

Residues Leu72, Gly103, and 122–127 (LSPLTF) each bind S-adenosyl-L-methionine.

It belongs to the RNA methyltransferase RlmH family. In terms of assembly, homodimer.

It localises to the cytoplasm. It catalyses the reaction pseudouridine(1915) in 23S rRNA + S-adenosyl-L-methionine = N(3)-methylpseudouridine(1915) in 23S rRNA + S-adenosyl-L-homocysteine + H(+). In terms of biological role, specifically methylates the pseudouridine at position 1915 (m3Psi1915) in 23S rRNA. This is Ribosomal RNA large subunit methyltransferase H from Alkalilimnicola ehrlichii (strain ATCC BAA-1101 / DSM 17681 / MLHE-1).